The sequence spans 176 residues: Probable DNA-directed RNA polymerase subunit delta (176 aa).

The 68-residue stretch at 14-81 folds into the HTH HARE-type domain; sequence KSFIDMAYTL…GENLWGLRDW (68 aa). Residues 114 to 176 form a disordered region; sequence LGEDEMDDDD…VFEDEEDFND (63 aa). 2 stretches are compositionally biased toward acidic residues: residues 116–145 and 153–176; these read EDEMDDDDDIPAQTDDQEELNDPEDEQVEE and VIEEDEDELDEDEEVFEDEEDFND.

Belongs to the RpoE family. As to quaternary structure, RNAP is composed of a core of 2 alpha, a beta and a beta' subunits. The core is associated with a delta subunit and one of several sigma factors.

Its function is as follows. Participates in both the initiation and recycling phases of transcription. In the presence of the delta subunit, RNAP displays an increased specificity of transcription, a decreased affinity for nucleic acids, and an increased efficiency of RNA synthesis because of enhanced recycling. The polypeptide is Probable DNA-directed RNA polymerase subunit delta (Staphylococcus aureus (strain JH1)).